We begin with the raw amino-acid sequence, 1155 residues long: uncharacterized protein (1155 aa).

The first 19 residues, 1–19 (MNKNIFITLLISSLLLLSG), serve as a signal peptide directing secretion. C20 is lipidated: N-palmitoyl cysteine. Residue C20 is the site of S-diacylglycerol cysteine attachment. A run of 4 helical transmembrane segments spans residues 291–311 (VSAI…IGNI), 395–415 (LGFI…FLIF), 424–444 (ALIT…FMLF), and 459–479 (ISYA…SMII).

This sequence belongs to the TrbL/VirB6 family.

Its subcellular location is the cell membrane. This is an uncharacterized protein from Rickettsia felis (strain ATCC VR-1525 / URRWXCal2) (Rickettsia azadi).